The following is a 92-amino-acid chain: MSELEKAVVALIDVFHQYSGREGDKHKLKKSELKELINNELSHFLEEIKEQEVVDKVMETLDSDGDGECDFQEFMAFVAMITTACHEFFEHE.

S2 carries the post-translational modification N-acetylserine. EF-hand domains are found at residues 13–48 (DVFHQYSGREGDKHKLKKSELKELINNELSHFLEEI) and 49–84 (KEQEVVDKVMETLDSDGDGECDFQEFMAFVAMITTA). A Zn(2+)-binding site is contributed by H16. Residues S19, E22, and D24 each coordinate Ca(2+). Zn(2+) is bound at residue H26. Ca(2+)-binding residues include D62, D64, D66, E68, and E73. Positions 86 and 91 each coordinate Zn(2+).

The protein belongs to the S-100 family. Dimer of either two alpha chains, or two beta chains, or one alpha and one beta chain. The S100B dimer binds two molecules of STK38. Interacts with CACYBP in a calcium-dependent manner. Interacts with ATAD3A; this interaction probably occurs in the cytosol prior to ATAD3A mitochondrial targeting. Interacts with S100A6. The S100B dimer interacts with two molecules of CAPZA1. Interacts with AGER. Interacts with PPP5C (via TPR repeats); the interaction is calcium-dependent and modulates PPP5C activity. Interacts with TPPP; this interaction inhibits TPPP dimerization. Interacts with isoform CLSTN3beta of CLSTN3; interaction promotes secretion.

It localises to the cytoplasm. It is found in the nucleus. The protein localises to the secreted. In terms of biological role, small zinc- and- and calcium-binding protein that is highly expressed in astrocytes and constitutes one of the most abundant soluble proteins in brain. Weakly binds calcium but binds zinc very tightly-distinct binding sites with different affinities exist for both ions on each monomer. Physiological concentrations of potassium ion antagonize the binding of both divalent cations, especially affecting high-affinity calcium-binding sites. Acts as a neurotrophic factor that promotes astrocytosis and axonal proliferation. Involved in innervation of thermogenic adipose tissue by acting as an adipocyte-derived neurotrophic factor that promotes sympathetic innervation of adipose tissue. Binds to and initiates the activation of STK38 by releasing autoinhibitory intramolecular interactions within the kinase. Interaction with AGER after myocardial infarction may play a role in myocyte apoptosis by activating ERK1/2 and p53/TP53 signaling. Could assist ATAD3A cytoplasmic processing, preventing aggregation and favoring mitochondrial localization. May mediate calcium-dependent regulation on many physiological processes by interacting with other proteins, such as TPR-containing proteins, and modulating their activity. This chain is Protein S100-B (S100B), found in Bos taurus (Bovine).